The following is a 406-amino-acid chain: Synaptic vesicle membrane protein VAT-1 homolog (406 aa).

The tract at residues 1–57 is disordered; it reads MSAEREAAEAATVAAATEAGAETGTGAGEGAPSQPPTVEVASDPQPPPAPEASASAS. An N-acetylserine modification is found at S2. A Phosphoserine modification is found at S2. The span at 9-22 shows a compositional bias: low complexity; that stretch reads EAATVAAATEAGAE. A phosphoserine mark is found at S33 and S42.

Belongs to the zinc-containing alcohol dehydrogenase family. Quinone oxidoreductase subfamily.

It localises to the cytoplasm. The protein resides in the mitochondrion outer membrane. In terms of biological role, plays a part in calcium-regulated keratinocyte activation in epidermal repair mechanisms. Has no effect on cell proliferation. Possesses ATPase activity. Negatively regulates mitochondrial fusion in cooperation with mitofusin proteins (MFN1-2). The polypeptide is Synaptic vesicle membrane protein VAT-1 homolog (Vat1) (Mus musculus (Mouse)).